We begin with the raw amino-acid sequence, 138 residues long: Ribosome-binding factor A (138 aa).

This sequence belongs to the RbfA family. Monomer. Binds 30S ribosomal subunits, but not 50S ribosomal subunits or 70S ribosomes.

It localises to the cytoplasm. Functionally, one of several proteins that assist in the late maturation steps of the functional core of the 30S ribosomal subunit. Associates with free 30S ribosomal subunits (but not with 30S subunits that are part of 70S ribosomes or polysomes). Required for efficient processing of 16S rRNA. May interact with the 5'-terminal helix region of 16S rRNA. The polypeptide is Ribosome-binding factor A (Bradyrhizobium sp. (strain ORS 278)).